Reading from the N-terminus, the 416-residue chain is Lipid III flippase (416 aa).

The Cytoplasmic portion of the chain corresponds to 1-17 (MSLAKASLWTAASTLVK). Residues 18-38 (IGAGLLVGKLLAVSFGPAGLG) traverse the membrane as a helical segment. The Periplasmic segment spans residues 39-45 (LAANFRQ). The chain crosses the membrane as a helical span at residues 46-66 (LITVLGVLAGAGIFNGVTKYV). Topologically, residues 67-84 (AQYHDNPQQLRRVVGTSS) are cytoplasmic. A helical transmembrane segment spans residues 85 to 105 (AMVLGFSTLMALVFVLAAAPI). The Periplasmic segment spans residues 106–121 (SQGLFGNTDYQGLVRL). The helical transmembrane segment at 122 to 142 (VALVQMGIAWGNLLLALMKGF) threads the bilayer. The Cytoplasmic portion of the chain corresponds to 143 to 144 (RD). A helical transmembrane segment spans residues 145 to 165 (AAGNALSLIVGSLIGVLAYYV). Residues 166–174 (SYRLGGYEG) lie on the Periplasmic side of the membrane. A helical transmembrane segment spans residues 175–195 (ALLGLALIPALVVIPAAIMLI). The Cytoplasmic portion of the chain corresponds to 196–216 (KRGVIPLSYLKPSWDNGLAGQ). A helical membrane pass occupies residues 217–237 (LSKFTLMALITSVTLPVAYIM). The Periplasmic portion of the chain corresponds to 238–259 (MRKLLAAQYSWDEVGIWQGVSS). The helical transmembrane segment at 260–280 (ISDAYLQFITASFSVYLLPTL) threads the bilayer. Residues 281–302 (SRLTEKRDITREVVKSLKFVLP) are Cytoplasmic-facing. Residues 303 to 323 (AVAAASFTVWLLRDFAIWLLL) traverse the membrane as a helical segment. Over 324-334 (SNKFTAMRDLF) the chain is Periplasmic. The chain crosses the membrane as a helical span at residues 335 to 355 (AWQLVGDVLKVGAYVFGYLVI). The Cytoplasmic portion of the chain corresponds to 356-370 (AKASLRFYILAEVSQ). The next 2 membrane-spanning stretches (helical) occupy residues 371–391 (FTLL…LGAA) and 392–412 (QAYM…FLLW). Over 413–416 (RRRA) the chain is Cytoplasmic.

It belongs to the polysaccharide transport (PST) (TC 2.A.66.2) family. Probably part of a complex composed of WzxE, WzyE and WzzE.

The protein localises to the cell inner membrane. Its pathway is bacterial outer membrane biogenesis; enterobacterial common antigen biosynthesis. Functionally, mediates the transbilayer movement of Und-PP-GlcNAc-ManNAcA-Fuc4NAc (lipid III) from the inner to the outer leaflet of the cytoplasmic membrane during the assembly of enterobacterial common antigen (ECA). Required for the assembly of the phosphoglyceride-linked form of ECA (ECA(PG)) and the water-soluble cyclic form of ECA (ECA(CYC)). Could also mediate the translocation of Und-PP-GlcNAc. The protein is Lipid III flippase of Escherichia coli (strain K12).